Consider the following 123-residue polypeptide: MATINQLVRQPRKRIVEKSDVPALQNCPQRRGVCTRVYTTTPKKPNSALRKVCRVRLTNGYEVSSYIGGEGHNLQEHSVVLIRGGRVKDLPGVRYHTVRGSLDTSGVKDRKQGRSKYGTKRPK.

A 3-methylthioaspartic acid modification is found at D89. The segment at 100–123 (GSLDTSGVKDRKQGRSKYGTKRPK) is disordered. Residues 113 to 123 (GRSKYGTKRPK) show a composition bias toward basic residues.

It belongs to the universal ribosomal protein uS12 family. As to quaternary structure, part of the 30S ribosomal subunit. Contacts proteins S8 and S17. May interact with IF1 in the 30S initiation complex.

Functionally, with S4 and S5 plays an important role in translational accuracy. Interacts with and stabilizes bases of the 16S rRNA that are involved in tRNA selection in the A site and with the mRNA backbone. Located at the interface of the 30S and 50S subunits, it traverses the body of the 30S subunit contacting proteins on the other side and probably holding the rRNA structure together. The combined cluster of proteins S8, S12 and S17 appears to hold together the shoulder and platform of the 30S subunit. This is Small ribosomal subunit protein uS12 from Ectopseudomonas mendocina (strain ymp) (Pseudomonas mendocina).